We begin with the raw amino-acid sequence, 555 residues long: Zinc finger and SCAN domain-containing protein 21 (555 aa).

Disordered stretches follow at residues 1–74 (MTKV…SKDK), 102–133 (TIKAEEDDEKDKGHPSPEISRQRFRQFGYHDT), 204–243 (LDEPGLQVSSPPNEQKQSWEKMSTSGTAMESLSSTETQHV), and 263–354 (EEVF…RPAP). 3 tandem repeats follow at residues 18-56 (ESMGPSPIKVEEDEEKDKCCPTLELSHKHFRQSGNQDTL), 57-95 (EPMGPSTIKAEEDESKDKCRPNLEISRKSFKQFGYQDTL), and 96-134 (EQLGPSTIKAEEDDEKDKGHPSPEISRQRFRQFGYHDTP). The segment at 18–134 (ESMGPSPIKV…FRQFGYHDTP (117 aa)) is 3 X 39 AA approximate tandem repeats. Residue Lys26 forms a Glycyl lysine isopeptide (Lys-Gly) (interchain with G-Cter in SUMO2) linkage. Residues 122 to 204 (RQRFRQFGYH…TLLEDLEQEL (83 aa)) enclose the SCAN box domain. A compositionally biased stretch (polar residues) spans 210–240 (QVSSPPNEQKQSWEKMSTSGTAMESLSSTET). A compositionally biased stretch (basic and acidic residues) spans 280–302 (PQKEDSADEHRSSEEESHADGLK). Residues Lys302 and Lys313 each participate in a glycyl lysine isopeptide (Lys-Gly) (interchain with G-Cter in SUMO2) cross-link. Over residues 316–332 (SRSERQWANNLERERGT) the composition is skewed to basic and acidic residues. C2H2-type zinc fingers lie at residues 359–381 (YICAECGKAFSNSSNLTKHRRTH), 387–409 (YVCTKCGKAFSHSSNLTLHYRTH), 415–436 (YDCKCGKAFGQSSDLLKHQRMH), 442–464 (YQCKDCGKAFSGKGSLIRHYRIH), 470–492 (YQCNECGKSFSQHAGLSSHQRLH), 498–520 (YKCKECGKAFNHSSNFNKHHRIH), and 526–548 (YWCSHCGKTFCSKSNLSKHQRVH). Residue Lys431 forms a Glycyl lysine isopeptide (Lys-Gly) (interchain with G-Cter in SUMO2) linkage.

It belongs to the krueppel C2H2-type zinc-finger protein family. In terms of tissue distribution, expressed predominantly in the spermatocytes and spermatids of adult testes. It is also present at lower levels in the ovary, brain, spleen, embryo and fetus.

The protein localises to the nucleus. Its function is as follows. Strong transcriptional activator. Plays an important role in spermatogenesis; essential for the progression of meiotic prophase I in spermatocytes. This chain is Zinc finger and SCAN domain-containing protein 21 (Zscan21), found in Mus musculus (Mouse).